A 549-amino-acid chain; its full sequence is Serine/threonine-protein phosphatase PPQ (549 aa).

Residues 1-13 are compositionally biased toward polar residues; it reads MRRSPSRSNNNFA. Disordered stretches follow at residues 1–50, 64–85, 133–158, and 189–219; these read MRRS…RSLP, YNTL…DNLL, TSST…NYSS, and SRVK…PKSS. Low complexity-rich tracts occupy residues 16 to 32 and 68 to 83; these read NCST…TTPS and ASAG…SNDN. Residues 205 to 217 show a composition bias toward polar residues; it reads APSSPTSGIPNPK. Residues aspartate 301, histidine 303, aspartate 329, and asparagine 361 each contribute to the Mn(2+) site. Histidine 362 acts as the Proton donor in catalysis. The Mn(2+) site is built by histidine 410 and histidine 485.

This sequence belongs to the PPP phosphatase family. PP-Z subfamily. Mn(2+) serves as cofactor.

It catalyses the reaction O-phospho-L-seryl-[protein] + H2O = L-seryl-[protein] + phosphate. The catalysed reaction is O-phospho-L-threonyl-[protein] + H2O = L-threonyl-[protein] + phosphate. Functionally, phosphatase involved in the regulation of protein synthesis. Affects translational accuracy. This chain is Serine/threonine-protein phosphatase PPQ (PPQ1), found in Saccharomyces cerevisiae (strain ATCC 204508 / S288c) (Baker's yeast).